The chain runs to 561 residues: DISARM protein DrmB (561 aa).

It localises to the cytoplasm. In terms of biological role, component of antiviral defense system DISARM (defense island system associated with restriction-modification), composed of DrmE, DrmA, DrmB, DrmC and DrmMII. DISARM is probably a multi-gene restriction module, this subunit has an unknown function. Expression of DISARM in B.subtilis (strain BEST7003) confers resistance to phages Nf, phi29, phi105, phi3T, SPO1, SPR and SPP1. Protection is over 10(7)-fold against phi3T, 10(4)-10(5)-fold against Nf, phi29, phi105 and SPR, 100-fold against SPO1 and 10-fold against SPP1. DISARM does not interfere with phage adsorption, but instead interferes with (phi3T) DNA replication early in its cycle, preventing replication, circularization and lysogeny and probably causes phage DNA degradation (DNA is degraded in SPP1-infected cells). The protein is DISARM protein DrmB of Bacillus paralicheniformis (strain ATCC 9945a / NCIMB 11709 / CD-2).